We begin with the raw amino-acid sequence, 345 residues long: MKILFLACLRAHTGNSTTALRIKDHLEAAGHTCVLKDAAILESSEVETLISQEKFNAGLIIQLYKAGRFLMGNRIPFGAIFGGTDINEDVKNEEKCRVMGAVLEEARFVVAFTHKIKELAATKWPHAKHKIHIQPQGILTKPSKSFDYEAFLQNAGIRHKSGHLHLYVLICGLRRVKDPLYLAEMFAKWHEKEPNVYLAIIGPMVDPVFTKEVENKLEEIDGVYLIKEIPQSDLQAVIKRSFALVNSSLSEGMSAAILEAMDLEVPVLARDIPGNSAIIKHEDTGLLFSTPQEFVQLSKRLMTEPELKRRIVSNAKRYVNSNHSWELERDTYQTLILNLQVNGNI.

The signal sequence occupies residues 1 to 19; it reads MKILFLACLRAHTGNSTTA. N-linked (GlcNAc...) asparagine glycans are attached at residues Asn-246 and Asn-322.

The protein belongs to the glycosyltransferase group 1 family. Glycosyltransferase 4 subfamily.

It is found in the secreted. The chain is Glycosyltransferase 1 domain-containing protein 1 (glt1d1) from Xenopus tropicalis (Western clawed frog).